We begin with the raw amino-acid sequence, 482 residues long: Regulator of nonsense transcripts UPF3 (482 aa).

The tract at residues K9–H14 is binds to UPF2. A necessary for interaction with UPF2 region spans residues K9 to R219. A sufficient for association with EJC core region spans residues Y53–T482. Residues P173–T482 are disordered. Residues R201–S214 are compositionally biased toward basic and acidic residues. 3 stretches are compositionally biased toward polar residues: residues A223–G239, D292–S308, and R325–E336. Composition is skewed to basic and acidic residues over residues Q337–K348 and E370–S394. A compositionally biased stretch (polar residues) spans S414–R435.

The protein belongs to the RENT3 family. Found in a post-splicing messenger ribonucleoprotein (mRNP) complex. Associates with the exon junction complex (EJC). Interacts with CPL1/FRY2.

Its subcellular location is the nucleus. It localises to the nucleolus. The protein localises to the cytoplasm. In terms of biological role, recruits UPF2 at the cytoplasmic side of the nuclear envelope and the subsequent formation of an UPF1-UPF2-UPF3 surveillance complex (including UPF1 bound to release factors at the stalled ribosome) is believed to activate NMD. Binds spliced mRNA upstream of exon-exon junctions. Involved in nonsense-mediated decay (NMD) of mRNAs containing premature stop codons (premature termination codon PTC) by associating with the nuclear exon junction complex (EJC) and serving as link between the EJC core and NMD machinery. Eliminates the production of nonsense-containing RNAs (ncRNAs). Required for plant development and adaptation to environmental stresses, including plant defense and response to wounding. The polypeptide is Regulator of nonsense transcripts UPF3 (Arabidopsis thaliana (Mouse-ear cress)).